We begin with the raw amino-acid sequence, 252 residues long: Adenosylcobinamide-GDP ribazoletransferase (252 aa).

Helical transmembrane passes span 36–56 (LVPI…MLLV), 59–79 (FFYK…TGGI), 109–129 (VGTN…VILT), 133–153 (PAYM…GSIV), 170–192 (SFID…VIFL), 199–218 (GYII…KYFT), and 228–248 (ILGA…YAVL).

This sequence belongs to the CobS family. Mg(2+) serves as cofactor.

The protein localises to the cell membrane. The enzyme catalyses alpha-ribazole + adenosylcob(III)inamide-GDP = adenosylcob(III)alamin + GMP + H(+). It carries out the reaction alpha-ribazole 5'-phosphate + adenosylcob(III)inamide-GDP = adenosylcob(III)alamin 5'-phosphate + GMP + H(+). It participates in cofactor biosynthesis; adenosylcobalamin biosynthesis; adenosylcobalamin from cob(II)yrinate a,c-diamide: step 7/7. Its function is as follows. Joins adenosylcobinamide-GDP and alpha-ribazole to generate adenosylcobalamin (Ado-cobalamin). Also synthesizes adenosylcobalamin 5'-phosphate from adenosylcobinamide-GDP and alpha-ribazole 5'-phosphate. This Clostridium acetobutylicum (strain ATCC 824 / DSM 792 / JCM 1419 / IAM 19013 / LMG 5710 / NBRC 13948 / NRRL B-527 / VKM B-1787 / 2291 / W) protein is Adenosylcobinamide-GDP ribazoletransferase.